A 219-amino-acid polypeptide reads, in one-letter code: Ribose-5-phosphate isomerase A (219 aa).

Substrate contacts are provided by residues 28–31, 81–84, and 94–97; these read SGST, DGAD, and KGGG. The active-site Proton acceptor is the glutamate 103. Lysine 121 serves as a coordination point for substrate.

It belongs to the ribose 5-phosphate isomerase family. Homodimer.

The enzyme catalyses aldehydo-D-ribose 5-phosphate = D-ribulose 5-phosphate. It functions in the pathway carbohydrate degradation; pentose phosphate pathway; D-ribose 5-phosphate from D-ribulose 5-phosphate (non-oxidative stage): step 1/1. Functionally, catalyzes the reversible conversion of ribose-5-phosphate to ribulose 5-phosphate. The sequence is that of Ribose-5-phosphate isomerase A from Histophilus somni (strain 2336) (Haemophilus somnus).